The chain runs to 152 residues: Small ribosomal subunit protein uS15 (152 aa).

The protein belongs to the universal ribosomal protein uS15 family. In terms of assembly, part of the 30S ribosomal subunit.

The protein is Small ribosomal subunit protein uS15 of Methanospirillum hungatei JF-1 (strain ATCC 27890 / DSM 864 / NBRC 100397 / JF-1).